A 302-amino-acid chain; its full sequence is tRNA dimethylallyltransferase (302 aa).

2–9 lines the ATP pocket; it reads GPTACGKS. 4 to 9 lines the substrate pocket; sequence TACGKS. Interaction with substrate tRNA regions lie at residues 27–30 and 149–153; these read DSAL and QRLIR.

This sequence belongs to the IPP transferase family. In terms of assembly, monomer. Mg(2+) is required as a cofactor.

The enzyme catalyses adenosine(37) in tRNA + dimethylallyl diphosphate = N(6)-dimethylallyladenosine(37) in tRNA + diphosphate. Functionally, catalyzes the transfer of a dimethylallyl group onto the adenine at position 37 in tRNAs that read codons beginning with uridine, leading to the formation of N6-(dimethylallyl)adenosine (i(6)A). This Buchnera aphidicola subsp. Acyrthosiphon pisum (strain 5A) protein is tRNA dimethylallyltransferase.